A 375-amino-acid chain; its full sequence is 2-heptyl-3-hydroxy-4(1H)-quinolone synthase (375 aa).

This sequence belongs to the 3-hydroxybenzoate 6-hydroxylase family.

The catalysed reaction is 2-heptyl-4(1H)-quinolone + NADH + O2 + H(+) = 2-heptyl-3-hydroxy-4(1H)-quinolone + NAD(+) + H2O. In terms of biological role, involved in the degradation pathway of the Pseudomonas aeruginosa quorum sensing signal molecule HHQ (2-heptyl-4(1H)-quinolone) to anthranilate. Catalyzes the hydroxylation of HHQ to PQS (2-heptyl-3-hydroxy-4(1H)-quinolone). In Mycobacteroides abscessus (strain ATCC 19977 / DSM 44196 / CCUG 20993 / CIP 104536 / JCM 13569 / NCTC 13031 / TMC 1543 / L948) (Mycobacterium abscessus), this protein is 2-heptyl-3-hydroxy-4(1H)-quinolone synthase.